The sequence spans 224 residues: MANSVFWAIAVALVLGAEAYMPLDYRCGVKPKSRDNCGPPGISPDECVKKGCCFDDSDPDSIWCYTPWKFEDTICNPAEPKARVNCGYPGITSQDCDKKGCCFNDTIPNVVWCYQPIIEAVERDCSAVEPKKRVNCGPPGVSPDECIKNGCCFNSDVGGVPWCFKPEIKKELLQCAVLPKARINCGYPDITMDQCYKKGCCYDSSESDSIWCFYPDIEDVTIIE.

An N-terminal signal peptide occupies residues 1-17 (MANSVFWAIAVALVLGA). P-type domains follow at residues 25 to 68 (YRCG…YTPW), 73 to 117 (TICN…YQPI), 123 to 167 (RDCS…FKPE), and 173 to 216 (LQCA…FYPD). Disulfide bonds link Cys-27/Cys-53, Cys-37/Cys-52, Cys-47/Cys-64, Cys-75/Cys-102, Cys-86/Cys-101, Cys-96/Cys-113, Cys-125/Cys-152, Cys-136/Cys-151, Cys-146/Cys-163, Cys-175/Cys-201, Cys-185/Cys-200, and Cys-195/Cys-212. A glycan (N-linked (GlcNAc...) asparagine) is linked at Asn-104.

Post-translationally, glycosylated. Stomach mucosa.

Its subcellular location is the secreted. Functionally, may act as a growth factor. The sequence is that of Putative gastrointestinal growth factor xP4 (p4) from Xenopus laevis (African clawed frog).